We begin with the raw amino-acid sequence, 515 residues long: Gap junction alpha-9 protein (515 aa).

The Cytoplasmic segment spans residues 1-19 (MGDWNLLGDTLEEVHIHST). Residues 20–40 (MIGKIWLTILFIFRMLVLGVA) form a helical membrane-spanning segment. Residues 41-77 (AEDVWNDEQSGFICNTEQPGCRNVCYDQAFPISLIRY) lie on the Extracellular side of the membrane. Residues 78–98 (WVLQVIFVSSPSLVYMGHALY) traverse the membrane as a helical segment. The Cytoplasmic portion of the chain corresponds to 99-166 (RLRVLEEERQ…YVIHIFTRSV (68 aa)). Residues 167–187 (VEVGFMIGQYLLYGFHLEPLF) traverse the membrane as a helical segment. Residues 188–209 (KCHGHPCPNIIDCFVSRPTEKT) lie on the Extracellular side of the membrane. The helical transmembrane segment at 210 to 230 (IFLLFMQSIATISLFLNILEI) threads the bilayer. The Cytoplasmic segment spans residues 231–515 (FHLGFKKIKR…GRRVPTDLQI (285 aa)). The segment covering 370-380 (KRETEGKDSKR) has biased composition (basic and acidic residues). Disordered stretches follow at residues 370–400 (KRET…GENN) and 428–472 (SSTE…NTAD). Residues 456–472 (PPSQGDSQSLDIPNTAD) are compositionally biased toward polar residues.

It belongs to the connexin family. Alpha-type (group II) subfamily. In terms of assembly, a connexon is composed of a hexamer of connexins. As to expression, highly abundant in skeletal muscle. Also detected in testis.

It is found in the cell membrane. The protein localises to the cell junction. Its subcellular location is the gap junction. In terms of biological role, one gap junction consists of a cluster of closely packed pairs of transmembrane channels, the connexons, through which materials of low MW diffuse from one cell to a neighboring cell. This Homo sapiens (Human) protein is Gap junction alpha-9 protein (GJA9).